A 98-amino-acid polypeptide reads, in one-letter code: NADH-ubiquinone oxidoreductase chain 4L (98 aa).

The next 3 helical transmembrane spans lie at 1-21 (MPLIHINIMMAFIMSLVGLLM), 29-49 (ALLCLEGMMLSLFILTALLAL), and 61-81 (IILLVFAACEAAIGLALLVMI).

This sequence belongs to the complex I subunit 4L family. In terms of assembly, core subunit of respiratory chain NADH dehydrogenase (Complex I) which is composed of 45 different subunits.

The protein localises to the mitochondrion inner membrane. The enzyme catalyses a ubiquinone + NADH + 5 H(+)(in) = a ubiquinol + NAD(+) + 4 H(+)(out). In terms of biological role, core subunit of the mitochondrial membrane respiratory chain NADH dehydrogenase (Complex I) which catalyzes electron transfer from NADH through the respiratory chain, using ubiquinone as an electron acceptor. Part of the enzyme membrane arm which is embedded in the lipid bilayer and involved in proton translocation. The sequence is that of NADH-ubiquinone oxidoreductase chain 4L (MT-ND4L) from Kogia breviceps (Pygmy sperm whale).